A 187-amino-acid chain; its full sequence is GTPase KRas (187 aa).

GTP contacts are provided by residues 10-18, 29-35, 59-60, and 116-119; these read GAVGVGKSA, VDEYDPT, AG, and NKCA. An Effector region motif is present at residues 32–40; sequence YDPTIEDSY. The tract at residues 168–187 is disordered; that stretch reads EKMSKDGKKKKKSKTKCSIL. A Cysteine methyl ester modification is found at Cys184. Cys184 carries S-farnesyl cysteine lipidation. A propeptide spans 185–187 (removed in mature form); that stretch reads SIL.

The protein belongs to the small GTPase superfamily. Ras family.

The protein localises to the cell membrane. The protein resides in the cytoplasm. It carries out the reaction GTP + H2O = GDP + phosphate + H(+). Alternates between an inactive form bound to GDP and an active form bound to GTP. Activated by a guanine nucleotide-exchange factor (GEF) and inactivated by a GTPase-activating protein (GAP). Ras proteins bind GDP/GTP and possess intrinsic GTPase activity. Plays an important role in the regulation of cell proliferation. This chain is GTPase KRas (kras), found in Xenopus laevis (African clawed frog).